The primary structure comprises 702 residues: Elongation factor G (702 aa).

The 279-residue stretch at Asp8–Leu286 folds into the tr-type G domain. GTP contacts are provided by residues Ala17–Thr24, Asp85–His89, and Asn139–Asp142.

Belongs to the TRAFAC class translation factor GTPase superfamily. Classic translation factor GTPase family. EF-G/EF-2 subfamily.

The protein resides in the cytoplasm. Catalyzes the GTP-dependent ribosomal translocation step during translation elongation. During this step, the ribosome changes from the pre-translocational (PRE) to the post-translocational (POST) state as the newly formed A-site-bound peptidyl-tRNA and P-site-bound deacylated tRNA move to the P and E sites, respectively. Catalyzes the coordinated movement of the two tRNA molecules, the mRNA and conformational changes in the ribosome. The sequence is that of Elongation factor G from Chloroflexus aurantiacus (strain ATCC 29366 / DSM 635 / J-10-fl).